The sequence spans 165 residues: Mating factor alpha-1 (165 aa).

A signal peptide (or 20) is located at residues 1 to 19; the sequence is MRFPSIFTAVLFAASSALA. 4 consecutive propeptides follow at residues 20–89, 105–110, 126–131, and 147–152; these read APVN…EAEA, EAEAEA, and EADAEA.

Functionally, the active factor is excreted into the culture medium by haploid cells of the alpha mating type and acts on cells of the opposite mating type (type A). It mediates the conjugation process between the two types by inhibiting the initiation of DNA synthesis in type a cells and synchronizing them with type alpha. This chain is Mating factor alpha-1 (MF(ALPHA)1), found in Saccharomyces cerevisiae (strain ATCC 204508 / S288c) (Baker's yeast).